The sequence spans 351 residues: uncharacterized protein (351 aa).

Positions 215, 226, 290, 319, and 333 each coordinate Mn(2+).

Belongs to the peptidase M24B family. The cofactor is Mn(2+).

This is an uncharacterized protein from Staphylococcus aureus (strain MRSA252).